The following is a 238-amino-acid chain: ATP-dependent dethiobiotin synthetase BioD (238 aa).

12–17 (EVGKTV) provides a ligand contact to ATP. Thr16 lines the Mg(2+) pocket. Lys37 is an active-site residue. A substrate-binding site is contributed by Thr41. Residues Asp50, 109 to 112 (EGAG), 170 to 171 (GS), and 200 to 202 (PAG) contribute to the ATP site. Positions 50 and 109 each coordinate Mg(2+).

Belongs to the dethiobiotin synthetase family. In terms of assembly, homodimer. The cofactor is Mg(2+).

The protein localises to the cytoplasm. The enzyme catalyses (7R,8S)-7,8-diammoniononanoate + CO2 + ATP = (4R,5S)-dethiobiotin + ADP + phosphate + 3 H(+). The protein operates within cofactor biosynthesis; biotin biosynthesis; biotin from 7,8-diaminononanoate: step 1/2. Functionally, catalyzes a mechanistically unusual reaction, the ATP-dependent insertion of CO2 between the N7 and N8 nitrogen atoms of 7,8-diaminopelargonic acid (DAPA, also called 7,8-diammoniononanoate) to form a ureido ring. The sequence is that of ATP-dependent dethiobiotin synthetase BioD from Streptomyces avermitilis (strain ATCC 31267 / DSM 46492 / JCM 5070 / NBRC 14893 / NCIMB 12804 / NRRL 8165 / MA-4680).